Here is a 260-residue protein sequence, read N- to C-terminus: UPF0246 protein Bamb_2261 (260 aa).

It belongs to the UPF0246 family.

In Burkholderia ambifaria (strain ATCC BAA-244 / DSM 16087 / CCUG 44356 / LMG 19182 / AMMD) (Burkholderia cepacia (strain AMMD)), this protein is UPF0246 protein Bamb_2261.